We begin with the raw amino-acid sequence, 324 residues long: MEDLALRPKTLDEYIGQERLKQKLRVYLEAAKARKEPLEHLLLFGPPGLGKTTLAHVIAHELGVNLRVTSGPAIEKPGDLAAILANSLEEGDILFIDEIHRLSRQAEEHLYPAMEDFVMDIVIGQGPAARTIRLELPRFTLIGATTRPGLITAPLLSRFGIVEHLEYYTPEELAQGVMRDARLLGVRITEEAALEIGRRSRGTMRVAKRLFRRVRDFAQVAGEEVITRERALEALAALGLDELGLEKRDREILEVLILRFGGGPVGLATLATALSEDPGTLEEVHEPYLIRQGLLKRTPRGRVATELAYRHLGYPPPVGPLLEP.

A large ATPase domain (RuvB-L) region spans residues 1-168 (MEDLALRPKT…FGIVEHLEYY (168 aa)). 10 residues coordinate ATP: Tyr14, Ile15, Gly48, Lys51, Thr52, Thr53, Asp97, Thr146, Tyr168, and Arg205. A Mg(2+)-binding site is contributed by Thr52. Positions 169-239 (TPEELAQGVM…RALEALAALG (71 aa)) are small ATPAse domain (RuvB-S). The segment at 242-324 (ELGLEKRDRE…PPPVGPLLEP (83 aa)) is head domain (RuvB-H). Arg297 and Arg302 together coordinate DNA.

Belongs to the RuvB family. In terms of assembly, homohexamer. Forms a complex with RuvA. Electron microscopic images suggest 2 closely interacting RuvA tetramers sandwich the HJ DNA; each tetramer associates with an RuvB hexamer. Forms 2 complexes with Holliday junction (HJ) DNA which probably have 1 and 2 RuvA tetramers per complex (called complex I and complex II). Forms an RuvA(8)-RuvB(12)-Holliday junction (HJ) complex. HJ DNA is sandwiched between 2 RuvA tetramers; dsDNA enters through RuvA and exits via RuvB. An RuvB hexamer assembles on each DNA strand where it exits the tetramer. Each RuvB hexamer is contacted by two RuvA subunits (via domain III) on 2 adjacent RuvB subunits; this complex drives branch migration. In the full resolvosome a probable DNA-RuvA(4)-RuvB(12)-RuvC(2) complex forms which resolves the HJ. Mg(2+) serves as cofactor.

It is found in the cytoplasm. It catalyses the reaction ATP + H2O = ADP + phosphate + H(+). With respect to regulation, the activity of RuvB is enhanced by E.coli RuvA. The RuvA-RuvB-RuvC complex processes Holliday junction (HJ) DNA during genetic recombination and DNA repair, while the RuvA-RuvB complex plays an important role in the rescue of blocked DNA replication forks via replication fork reversal (RFR). RuvA specifically binds to HJ cruciform DNA, conferring on it an open structure. The RuvB hexamer acts as an ATP-dependent pump, pulling dsDNA into and through the RuvAB complex. RuvB forms 2 homohexamers on either side of HJ DNA bound by 1 or 2 RuvA tetramers; 4 subunits per hexamer contact DNA at a time. Coordinated motions by a converter formed by DNA-disengaged RuvB subunits stimulates ATP hydrolysis and nucleotide exchange. Immobilization of the converter enables RuvB to convert the ATP-contained energy into a lever motion, pulling 2 nucleotides of DNA out of the RuvA tetramer per ATP hydrolyzed, thus driving DNA branch migration. The RuvB motors rotate together with the DNA substrate, which together with the progressing nucleotide cycle form the mechanistic basis for DNA recombination by continuous HJ branch migration. Branch migration allows RuvC to scan DNA until it finds its consensus sequence, where it cleaves and resolves cruciform DNA. Functionally, ruvB is a Mg(2+)-dependent, DNA-dependent ATPase with an equal preference for supercoiled and linear dsDNA; all (d)NTPs tested were efficiently hydrolyzed. Promotes Holliday junction (HJ) dissociation at 60 degrees Celsius in the presence of ATP but not ATP-gamma-S or ADP; (d)ATP, (d)CTP and dTTP also power dissociation in the absence of any RuvA. RuvA stimulates the ATPase of RuvB in the presence of dsDNA and HJ branch migration by RuvB. Excess RuvB stimulates some branch migration in vitro even in the presence of mutant RuvA. In Thermus thermophilus (strain ATCC 27634 / DSM 579 / HB8), this protein is Holliday junction branch migration complex subunit RuvB.